Here is a 748-residue protein sequence, read N- to C-terminus: MTTIKTSNLGFPRLGRKREWKKAIENYWAHKIDKAELDQTLTDLHKENLLLQKNYHLDSIPVGDFSLYDHILDTSLLFNIIPERFQGREVNDDLLFDIARGNKEHVASALIKWFNTNYHYIVPEWDNVEPKVEKNTLLERFKYAQSINVNAHPVIVGPITFVKLSKGGHQSFEEKVETLLPLYKEVLQSLVDAGAEYIQIDEPILVTDDSESYEDITRKAYDYFANEGLGKYLVIQTYFERVHLKFLSSLPVGGLGLDLVHDNGYNLKQIEDGDFDQSKALYAGIIDGRNVWAADIEAKKQLIETLQQHTQQLVIQPSSSLLHVPVSLDDETLDESIAEGLSFATEKLDELDALRRLFNDNDLSKYEHYKARYERFQSQSFKNLEYDFESVPTHRKSPFAKRKQLQNQRLNLPDLPTTTIGSFPQTREVRKFRADWKNNRITDAEYQEFLQNEIARWIKIQEDIGLDVLVHGEFERNDMVEFFGEKLQGFLVTKFGWVQSYGSRAVKPPVIYGDVKWTAPLTVKETVYAQSLTDKPVKGMLTGPVTILNWSFERVDVPRKVVQDQIALAIDEEVLALEEAGIKVIQVDEPALREGLPLRSEYHEQYLEDAVHSFKLATSSVHDETQIHTHMCYSQFGQIIHAIHDLDADVISIETSRSHGDLIQDFEDINYDLGIGLGVYDIHSPRIPTEEEITTAINRSLQQIDRSLFWVNPDCGLKTRKENEVKDALTVLVNAVKKKRQESESTTA.

5-methyltetrahydropteroyltri-L-glutamate-binding positions include 18–21 (REWK) and Lys112. L-homocysteine-binding positions include 420–422 (IGS) and Glu473. Residues 420-422 (IGS) and Glu473 each bind L-methionine. Trp550 serves as a coordination point for 5-methyltetrahydropteroyltri-L-glutamate. Asp588 lines the L-homocysteine pocket. Asp588 lines the L-methionine pocket. Residue Glu594 coordinates 5-methyltetrahydropteroyltri-L-glutamate. Zn(2+) contacts are provided by His630, Cys632, and Glu654. The active-site Proton donor is the His683. Cys715 is a binding site for Zn(2+).

Belongs to the vitamin-B12 independent methionine synthase family. Requires Zn(2+) as cofactor.

It catalyses the reaction 5-methyltetrahydropteroyltri-L-glutamate + L-homocysteine = tetrahydropteroyltri-L-glutamate + L-methionine. The protein operates within amino-acid biosynthesis; L-methionine biosynthesis via de novo pathway; L-methionine from L-homocysteine (MetE route): step 1/1. In terms of biological role, catalyzes the transfer of a methyl group from 5-methyltetrahydrofolate to homocysteine resulting in methionine formation. This Staphylococcus epidermidis (strain ATCC 12228 / FDA PCI 1200) protein is 5-methyltetrahydropteroyltriglutamate--homocysteine methyltransferase.